The following is a 195-amino-acid chain: Imidazoleglycerol-phosphate dehydratase (195 aa).

This sequence belongs to the imidazoleglycerol-phosphate dehydratase family.

The protein localises to the cytoplasm. The catalysed reaction is D-erythro-1-(imidazol-4-yl)glycerol 3-phosphate = 3-(imidazol-4-yl)-2-oxopropyl phosphate + H2O. The protein operates within amino-acid biosynthesis; L-histidine biosynthesis; L-histidine from 5-phospho-alpha-D-ribose 1-diphosphate: step 6/9. This is Imidazoleglycerol-phosphate dehydratase from Campylobacter concisus (strain 13826).